A 137-amino-acid chain; its full sequence is Small ribosomal subunit protein uS9 (137 aa).

Residues 103–137 form a disordered region; the sequence is PPLKAEGYLTRDPRAKERKKYGLHKARKAPQYSKR. The segment covering 118 to 137 has biased composition (basic residues); that stretch reads KERKKYGLHKARKAPQYSKR.

This sequence belongs to the universal ribosomal protein uS9 family.

In Crocosphaera subtropica (strain ATCC 51142 / BH68) (Cyanothece sp. (strain ATCC 51142)), this protein is Small ribosomal subunit protein uS9.